The sequence spans 717 residues: Polyribonucleotide nucleotidyltransferase (717 aa).

Positions 487 and 493 each coordinate Mg(2+). The KH domain occupies 554-613; that stretch reads PKIITMAINPDKIRDVIGPSGKQINKIIEETGVKIDIEQDGTVFISSINQEMNEKAKKII. Positions 623-691 constitute an S1 motif domain; sequence GEIYLGKVKR…KQGRVNLSRK (69 aa).

It belongs to the polyribonucleotide nucleotidyltransferase family. The cofactor is Mg(2+).

It is found in the cytoplasm. It carries out the reaction RNA(n+1) + phosphate = RNA(n) + a ribonucleoside 5'-diphosphate. In terms of biological role, involved in mRNA degradation. Catalyzes the phosphorolysis of single-stranded polyribonucleotides processively in the 3'- to 5'-direction. This is Polyribonucleotide nucleotidyltransferase from Bacillus mycoides (strain KBAB4) (Bacillus weihenstephanensis).